Here is a 181-residue protein sequence, read N- to C-terminus: MGLQQEISLQPWCHHPAESCQTTTDMTERLSAEQIKEYKGVFEMFDEEGNGEVKTGELEWLMSLLGINPTKSELASMAKDVDRDNKGFFNCDGFLALMGVYHEKAQNQESELRAAFRVFDKEGKGYIDWNTLKYVLMNAGEPLNEVEAEQMMKEADKDGDRTIDYEEFVAMMTGESFKLIQ.

4 consecutive EF-hand domains span residues 33-68 (EQIK…LGIN), 69-104 (PTKS…YHEK), 107-142 (NQES…AGEP), and 143-178 (LNEV…ESFK). 5 residues coordinate Ca(2+): aspartate 156, aspartate 158, aspartate 160, threonine 162, and glutamate 167.

It belongs to the calmodulin family. Calglandulin subfamily. In terms of tissue distribution, expressed in prostate, thymus, heart, skeleton muscle, bone marrow and ovary.

The protein localises to the cytoplasm. The protein resides in the nucleus. The chain is Calmodulin-like protein 6 (CALML6) from Homo sapiens (Human).